A 224-amino-acid chain; its full sequence is Cytosolic-abundant heat soluble protein 77580 (224 aa).

A compositionally biased stretch (low complexity) spans 1–13 (MSNYQQESSYQYS). The tract at residues 1-38 (MSNYQQESSYQYSDRSNNGQQQEQQEKKEVEHSSYTHT) is disordered. Positions 24–38 (QQEKKEVEHSSYTHT) are enriched in basic and acidic residues. The stretch at 83-191 (VIDTEAETEE…KRVLERSKFH (109 aa)) forms a coiled coil. CAHS motif regions lie at residues 122-140 (YRKQ…LEKQ) and 159-177 (QKRQ…LERE). A compositionally biased stretch (low complexity) spans 200 to 215 (AAAGSTHSGSSSVAVS). The interval 200 to 224 (AAAGSTHSGSSSVAVSESEKFQTNN) is disordered.

It belongs to the Cytosolic-abundant heat soluble protein (CAHS) family.

The protein localises to the cytoplasm. Functionally, CAHS proteins are cytosolic heat soluble proteins that seem to contribute to the anhydrobiosis in tardigrades, but their specific mechanisms are yet to be identified. It is possible that protection during anhydrobiosis might occur via the stabilization of vitrifying small molecules such as sugars, but not via the direct glass transition of CAHS proteins themselves. The sequence is that of Cytosolic-abundant heat soluble protein 77580 from Hypsibius exemplaris (Freshwater tardigrade).